Consider the following 144-residue polypeptide: Large ribosomal subunit protein uL14 (144 aa).

The protein belongs to the universal ribosomal protein uL14 family. Part of the 50S ribosomal subunit. Forms a cluster with proteins L3 and L24e, part of which may contact the 16S rRNA in 2 intersubunit bridges.

In terms of biological role, binds to 23S rRNA. Forms part of two intersubunit bridges in the 70S ribosome. This is Large ribosomal subunit protein uL14 from Pyrobaculum arsenaticum (strain DSM 13514 / JCM 11321 / PZ6).